Consider the following 165-residue polypeptide: MSRIYEQIEKDVEKIIGQYDGDKNGEVTINEAIEFFKRMGSKYPEKCAIVLFKMYDLDNEGKISYDEIQEEIFKRYQDKVREDQIKQYFQDDIEAFLLRYDKNRDNRIDFKELEQCFESIGSDHPKENANHIFTEIDKNRDGYLTIAEIKNYCRNTIRSKPYYQS.

EF-hand domains lie at 7–42 (QIEK…MGSK), 43–78 (YPEK…RYQD), 88–123 (YFQD…IGSD), and 124–159 (HPKE…TIRS). 20 residues coordinate Ca(2+): Asp20, Asp22, Asn24, Glu26, Glu31, Asp56, Asp58, Glu60, Lys62, Glu67, Asp101, Asn103, Asp105, Arg107, Glu112, Asp137, Asn139, Asp141, Tyr143, and Glu148.

This is Calcium-binding protein H (cbpH) from Dictyostelium discoideum (Social amoeba).